The chain runs to 1100 residues: Regulator of nonsense transcripts 1 (1100 aa).

The segment covering 42–53 (SQTQTQGQTQSQ) has biased composition (low complexity). Positions 42–67 (SQTQTQGQTQSQLDNQVNGPDGVLPN) are disordered. Positions 94 to 251 (TKDLPVHACS…NKLEELWKEN (158 aa)) constitute a Upf1 CH-rich domain. The Zn(2+) site is built by Cys-102, Cys-105, Cys-116, Ser-119, Cys-124, His-134, His-138, Cys-144, Cys-162, Cys-165, Cys-188, and Cys-192. Residues 102 to 134 (CSYCGIHDPACVVYCNTSKKWFCNGRGNTSGSH) are C3H. The tract at residues 116–144 (CNTSKKWFCNGRGNTSGSHIVNHLVRAKC) is CC/SHH/C. The interval 162–192 (CYNCGCRNVFLLGFIPAKADSVVVLLCRQPC) is C4. ATP is bound by residues Gln-455, 475-479 (GTGKT), Gln-645, Tyr-682, and Glu-813. The disordered stretch occupies residues 978 to 1065 (LGQVNGPAAG…QPELSQDSYL (88 aa)). Positions 982 to 993 (NGPAAGRGAPKG) are enriched in low complexity. The span at 1012 to 1063 (SGQPNMPNSQASQDLVSQPFSQGPLTQGYITMSQPSQMSQPGLSQPELSQDS) shows a compositional bias: polar residues.

This sequence belongs to the DNA2/NAM7 helicase family.

It is found in the cytoplasm. It localises to the P-body. Its subcellular location is the nucleus. The protein resides in the perinuclear region. Functionally, RNA-dependent helicase and ATPase required for nonsense-mediated decay (NMD) of mRNAs containing premature stop codons. Is recruited to mRNAs upon translation termination and undergoes a cycle of phosphorylation and dephosphorylation; its phosphorylation appears to be a key step in NMD. The formation of an upf1-upf2-upf3 surveillance complex is believed to activate NMD. The protein is Regulator of nonsense transcripts 1 of Danio rerio (Zebrafish).